Consider the following 264-residue polypeptide: S-adenosylmethionine decarboxylase proenzyme (264 aa).

Ser-112 functions as the Schiff-base intermediate with substrate; via pyruvic acid in the catalytic mechanism. At Ser-112 the chain carries Pyruvic acid (Ser); by autocatalysis. His-117 acts as the Proton acceptor; for processing activity in catalysis. The active-site Proton donor; for catalytic activity is Cys-140.

The protein belongs to the prokaryotic AdoMetDC family. Type 2 subfamily. Heterooctamer of four alpha and four beta chains arranged as a tetramer of alpha/beta heterodimers. The cofactor is pyruvate. Is synthesized initially as an inactive proenzyme. Formation of the active enzyme involves a self-maturation process in which the active site pyruvoyl group is generated from an internal serine residue via an autocatalytic post-translational modification. Two non-identical subunits are generated from the proenzyme in this reaction, and the pyruvate is formed at the N-terminus of the alpha chain, which is derived from the carboxyl end of the proenzyme. The post-translation cleavage follows an unusual pathway, termed non-hydrolytic serinolysis, in which the side chain hydroxyl group of the serine supplies its oxygen atom to form the C-terminus of the beta chain, while the remainder of the serine residue undergoes an oxidative deamination to produce ammonia and the pyruvoyl group blocking the N-terminus of the alpha chain.

The enzyme catalyses S-adenosyl-L-methionine + H(+) = S-adenosyl 3-(methylsulfanyl)propylamine + CO2. It functions in the pathway amine and polyamine biosynthesis; S-adenosylmethioninamine biosynthesis; S-adenosylmethioninamine from S-adenosyl-L-methionine: step 1/1. In terms of biological role, catalyzes the decarboxylation of S-adenosylmethionine to S-adenosylmethioninamine (dcAdoMet), the propylamine donor required for the synthesis of the polyamines spermine and spermidine from the diamine putrescine. The chain is S-adenosylmethionine decarboxylase proenzyme from Hamiltonella defensa subsp. Acyrthosiphon pisum (strain 5AT).